Here is a 126-residue protein sequence, read N- to C-terminus: Protein ApaG (126 aa).

The 125-residue stretch at 2-126 (SFPIDSIKIK…FRLAMPGVMQ (125 aa)) folds into the ApaG domain.

This chain is Protein ApaG, found in Shewanella denitrificans (strain OS217 / ATCC BAA-1090 / DSM 15013).